The primary structure comprises 290 residues: Arylamine N-acetyltransferase, pineal gland isozyme NAT-3 (290 aa).

The active-site Acyl-thioester intermediate is cysteine 68. Catalysis depends on residues histidine 107 and aspartate 122.

This sequence belongs to the arylamine N-acetyltransferase family.

The catalysed reaction is an arylamine + acetyl-CoA = an N-acetylarylamine + CoA. It carries out the reaction an N-hydroxyarylamine + acetyl-CoA = an N-acetoxyarylamine + CoA. Catalyzes the N- or O-acetylation of various arylamine and heterocyclic amine substrates, and participates in the detoxification of a plethora of hydrazine and arylamine drugs. This Gallus gallus (Chicken) protein is Arylamine N-acetyltransferase, pineal gland isozyme NAT-3.